The primary structure comprises 2365 residues: Voltage-dependent T-type calcium channel subunit alpha-1H (2365 aa).

A disordered region spans residues 1-63; the sequence is MTEGTLAADE…PGTECGADLG (63 aa). Residues 1–100 are Cytoplasmic-facing; the sequence is MTEGTLAADE…SWCLRLVSRR (100 aa). Residues 16-36 show a composition bias toward low complexity; it reads GASPSAPAAPVRASPASPGVP. The I repeat unit spans residues 87–422; that stretch reads TRPRSWCLRL…LCLVVIATQF (336 aa). The chain crosses the membrane as a helical span at residues 101-119; the sequence is WFEHISMLVIMLNCVTLGM. Topologically, residues 120–141 are extracellular; sequence FRPCEDVECRSERCSILEAFDD. Aspartate 140 serves as a coordination point for Zn(2+). The chain crosses the membrane as a helical span at residues 142 to 160; it reads FIFAFFAVEMVIKMVALGL. Over 161–169 the chain is Cytoplasmic; sequence FGQKCYLGD. The helical transmembrane segment at 170-184 threads the bilayer; sequence TWNRLDFFIVMAGMM. The Extracellular portion of the chain corresponds to 185 to 193; that stretch reads EYSLDGHNV. 2 residues coordinate Zn(2+): aspartate 189 and histidine 191. Asparagine 192 carries N-linked (GlcNAc...) asparagine glycosylation. Residues 194–212 traverse the membrane as a helical segment; sequence SLSAIRTVRVLRPLRAINR. Residues 213-232 lie on the Cytoplasmic side of the membrane; that stretch reads VPSMRILVTLLLDTLPMLGN. The chain crosses the membrane as a helical span at residues 233-253; that stretch reads VLLLCFFVFFIFGIVGVQLWA. At 254–394 the chain is on the extracellular side; the sequence is GLLRNRCFLD…YYVMDAHSFY (141 aa). N-linked (GlcNAc...) asparagine glycosylation occurs at asparagine 271. Residues 395–419 traverse the membrane as a helical segment; sequence NFIYFILLIIVGSFFMINLCLVVIA. At 420-790 the chain is on the cytoplasmic side; it reads TQFSETKQRE…SKLRRIVDSK (371 aa). 3 disordered regions span residues 490–573, 618–656, and 737–761; these read VDPS…SESV, PSGAVNSKGSTSSRPKGLRSAGTPGATAHSPLSLGSPSP, and GDCRDPVQQPHEGGTPGHGNERWRP. Positions 500–532 are enriched in basic residues; the sequence is GPRRRPRRAGRRTASVHHLVYHHHHHHHHHYHF. The span at 557–566 shows a compositional bias: pro residues; sequence PPSPPSPGHG. A compositionally biased stretch (polar residues) spans 621 to 631; it reads AVNSKGSTSSR. Residues 776 to 1015 form an II repeat; it reads WASFSSKLRR…LLVAILVEGF (240 aa). The helical transmembrane segment at 791–811 threads the bilayer; it reads YFNRGIMAAILVNTLSMGVEY. Topologically, residues 812–824 are extracellular; it reads HEQPDELTNALEI. Residues 825–846 traverse the membrane as a helical segment; that stretch reads SNIVFTSMFALEMLLKLLACGP. The Cytoplasmic portion of the chain corresponds to 847 to 852; sequence LGYIRN. Residues 853–871 form a helical membrane-spanning segment; it reads PYNIFDGIVVIISVWEIVG. At 872-879 the chain is on the extracellular side; sequence QADGGLSV. Residues 880–903 traverse the membrane as a helical segment; it reads LRTFRLLRVLKLVRFLPALRRQLV. Topologically, residues 904–914 are cytoplasmic; that stretch reads VLMRTMDNVAT. A helical membrane pass occupies residues 915 to 935; it reads FCMLLMLFIFIFSILGMHLFG. The Extracellular portion of the chain corresponds to 936–987; it reads CKFSLKTDSGDTVPDRKNFDSLLWAIVTVFQILTQEDWNVVLYNGMASTSSW. A helical transmembrane segment spans residues 988-1012; the sequence is AALYFVALMTFGNYVLFNLLVAILV. Over 1013–1301 the chain is Cytoplasmic; sequence EGFQAEGDAT…NRLRVSCQKV (289 aa). The tract at residues 1059-1215 is disordered; that stretch reads PNGHLEGRGS…HRSTMDLCPP (157 aa). Residues 1130–1147 show a composition bias toward low complexity; that stretch reads GPNSAGSSRRSSWNSLGR. Residues 1199 to 1209 show a composition bias toward basic and acidic residues; it reads RRAESLGHRST. The III repeat unit spans residues 1292–1569; that stretch reads NRLRVSCQKV…MFVGVVVENF (278 aa). A helical transmembrane segment spans residues 1302-1324; sequence IAHKMFDHVVLVFIFLNCITIAL. The Extracellular portion of the chain corresponds to 1325–1342; it reads ERPDIDPGSTERAFLSVS. A helical membrane pass occupies residues 1343 to 1363; it reads NYIFTAIFVVEMMVKVVALGL. Residues 1364-1373 lie on the Cytoplasmic side of the membrane; that stretch reads LWGEHAYLQS. A helical transmembrane segment spans residues 1374 to 1393; it reads SWNVLDGLLVLVSLVDIIVA. Residues 1394 to 1407 lie on the Extracellular side of the membrane; it reads VASAGGAKILGVLR. A helical transmembrane segment spans residues 1408-1429; it reads VLRLLRTLRPLRVISRAPGLKL. The Cytoplasmic segment spans residues 1430 to 1439; the sequence is VVETLISSLR. Residues 1440–1463 traverse the membrane as a helical segment; it reads PIGNIVLICCAFFIIFGILGVQLF. Residues 1464–1540 are Extracellular-facing; the sequence is KGKFYYCEGT…DQQPVQNHNP (77 aa). Asparagine 1477 carries an N-linked (GlcNAc...) asparagine glycan. Residues 1541–1566 traverse the membrane as a helical segment; the sequence is WMLLYFISFLLIVSFFVLNMFVGVVV. The Cytoplasmic segment spans residues 1567 to 1627; that stretch reads ENFHKCRQHQ…RRSIHSLCTS (61 aa). One copy of the IV repeat lies at 1613 to 1874; it reads DYSHTRRSIH…VVVAVLMKHL (262 aa). Residues 1628–1648 form a helical membrane-spanning segment; sequence HYLDLFITFIICLNVITMSME. Residues 1649-1662 are Extracellular-facing; sequence HYNQPKSLDEALKY. A helical transmembrane segment spans residues 1663-1684; that stretch reads CNYVFTIVFVFEAALKLVAFGF. At 1685-1691 the chain is on the cytoplasmic side; it reads RRFFKDR. A helical membrane pass occupies residues 1692-1710; sequence WNQLDLAIVLLSIMGIALE. The Extracellular segment spans residues 1711–1724; the sequence is EIEMNAALPINPTI. The helical transmembrane segment at 1725–1748 threads the bilayer; the sequence is IRIMRVLRIARVLKLLKMATGMRA. Topologically, residues 1749–1762 are cytoplasmic; sequence LLDTVVQALPQVGN. The chain crosses the membrane as a helical span at residues 1763–1783; it reads LGLLFMLLFFIYAALGVELFG. At 1784–1846 the chain is on the extracellular side; the sequence is RLECSEDNPC…KHCLSYLPAL (63 aa). A helical membrane pass occupies residues 1847 to 1874; the sequence is SPVYFVTFVLVAQFVLVNVVVAVLMKHL. At 1875-2365 the chain is on the cytoplasmic side; the sequence is EESNKEARED…APDDSGDEPV (491 aa). Polar residues-rich tracts occupy residues 1897-1916 and 1967-1983; these read QGSTAQPPSTAQESQGTEPD and VTSAHSPSLEPRTSFQV. Disordered regions lie at residues 1897-1920, 1967-1999, 2053-2264, and 2321-2365; these read QGSTAQPPSTAQESQGTEPDTPNL, VTSAHSPSLEPRTSFQVPSAASSPARVSDPLCA, APLG…GERW, and ELSM…DEPV. The segment covering 2092 to 2102 has biased composition (acidic residues); the sequence is DDAEAADPADE. Over residues 2172-2187 the composition is skewed to basic and acidic residues; that stretch reads GDGHLESGEVRARASE.

The protein belongs to the calcium channel alpha-1 subunit (TC 1.A.1.11) family. CACNA1H subfamily. Interacts (via N-terminal cytoplasmic domain) with STAC. In terms of processing, in response to raising of intracellular calcium, the T-type channels are activated by CaM-kinase II. As to expression, is highly expressed in lumbosacral and thoracolumbar dorsal root ganglion neurons.

It localises to the cell membrane. The catalysed reaction is Ca(2+)(in) = Ca(2+)(out). Voltage-sensitive calcium channel that gives rise to T-type calcium currents. T-type calcium channels belong to the 'low-voltage activated (LVA)' group. A particularity of this type of channel is an opening at quite negative potentials, and a voltage-dependent inactivation. T-type channels serve pacemaking functions in both central neurons and cardiac nodal cells and support calcium signaling in secretory cells and vascular smooth muscle. They may also be involved in the modulation of firing patterns of neurons. In the adrenal zona glomerulosa, participates in the signaling pathway leading to aldosterone production in response to either AGT/angiotensin II, or hyperkalemia. In Mus musculus (Mouse), this protein is Voltage-dependent T-type calcium channel subunit alpha-1H (Cacna1h).